The following is a 117-amino-acid chain: Large ribosomal subunit protein bL19 (117 aa).

The protein belongs to the bacterial ribosomal protein bL19 family.

Its function is as follows. This protein is located at the 30S-50S ribosomal subunit interface and may play a role in the structure and function of the aminoacyl-tRNA binding site. The protein is Large ribosomal subunit protein bL19 of Mycoplasmopsis pulmonis (strain UAB CTIP) (Mycoplasma pulmonis).